The primary structure comprises 306 residues: ADP,ATP carrier protein ER-ANT1 (306 aa).

Solcar repeat units follow at residues 8–101, 113–205, and 213–299; these read ERFS…FKNL, KWFA…IKPI, and GNFL…LHQI. Transmembrane regions (helical) follow at residues 10 to 37, 78 to 102, 111 to 131, 181 to 202, and 216 to 236; these read FSAD…VKLL, QANV…KNLL, YLKW…TTSL, FGVS…YDTI, and LASF…AYPF. ADP contacts are provided by Arg83 and Lys95. Residue Arg240 coordinates ADP. The tract at residues 240 to 245 is important for transport activity; the sequence is RRRMML. Positions 240 to 245 match the Nucleotide carrier signature motif motif; sequence RRRMML. Residues 276-296 form a helical membrane-spanning segment; it reads VTANMLLGVAGAGVLAGYDQL.

The protein belongs to the mitochondrial carrier (TC 2.A.29) family.

The protein resides in the endoplasmic reticulum membrane. The catalysed reaction is ADP(in) + ATP(out) = ADP(out) + ATP(in). ADP:ATP antiporter that catalyzes the exchange of ADP and ATP across the endoplasmic reticulum membrane. The protein is ADP,ATP carrier protein ER-ANT1 (ER-ANT1) of Arabidopsis thaliana (Mouse-ear cress).